The sequence spans 205 residues: Macrophage immunometabolism regulator (205 aa).

Residues 1 to 40 (MEVDINGVNRTNNSVPSTTEGSSPSKPDPEKPRCSSTPCS) are disordered. Residues 8 to 25 (VNRTNNSVPSTTEGSSPS) show a composition bias toward polar residues.

This sequence belongs to the UNC119-binding protein family. In terms of assembly, interacts with unc119 family proteins; interaction preferentially takes place when unc119 proteins are unliganded with myristoylated proteins.

It is found in the cytoplasm. Its subcellular location is the cell projection. The protein localises to the cilium. May play a role in immune regulation through regulation of the macrophage function. May also play a role in trafficking of proteins via its interaction with unc119 family cargo adapters. May play a role in ciliary membrane localization. This is Macrophage immunometabolism regulator (macir) from Xenopus tropicalis (Western clawed frog).